A 297-amino-acid chain; its full sequence is uncharacterized protein (297 aa).

One can recognise an HTH araC/xylS-type domain in the interval 187 to 285 (EKLIATLHAS…GYAPSAVLKN (99 aa)). DNA-binding regions (H-T-H motif) lie at residues 204 to 225 (ADMAATIPCSEAWLRRLFLRYT) and 252 to 275 (VGEVADTLNFFDSFHFSKAFKHKF).

This is an uncharacterized protein from Escherichia coli (strain K12).